We begin with the raw amino-acid sequence, 250 residues long: Lymphotoxin-beta (250 aa).

At 1 to 26 the chain is on the cytoplasmic side; that stretch reads MGAPGLETRAGGPNGKSYLLLASVGA. Residues 27 to 47 form a helical; Signal-anchor for type II membrane protein membrane-spanning segment; it reads AVLGTLLLSVPITVLTVLALM. The Extracellular portion of the chain corresponds to 48-250; the sequence is PQEQGGQVAD…KTFFGAVMVG (203 aa). Residues 87 to 249 enclose the THD domain; sequence PAAHLIGIAK…GKTFFGAVMV (163 aa). N-linked (GlcNAc...) asparagine glycosylation is present at N228.

The protein belongs to the tumor necrosis factor family. As to quaternary structure, heterotrimer of either two LTB and one LTA subunits or (less prevalent) two LTA and one LTB subunits.

The protein localises to the membrane. Cytokine that binds to LTBR/TNFRSF3. May play a specific role in immune response regulation. Provides the membrane anchor for the attachment of the heterotrimeric complex to the cell surface. The polypeptide is Lymphotoxin-beta (LTB) (Notamacropus eugenii (Tammar wallaby)).